The following is a 472-amino-acid chain: ATP synthase subunit beta (472 aa).

157–164 provides a ligand contact to ATP; the sequence is GGAGVGKT.

It belongs to the ATPase alpha/beta chains family. F-type ATPases have 2 components, CF(1) - the catalytic core - and CF(0) - the membrane proton channel. CF(1) has five subunits: alpha(3), beta(3), gamma(1), delta(1), epsilon(1). CF(0) has three main subunits: a(1), b(2) and c(9-12). The alpha and beta chains form an alternating ring which encloses part of the gamma chain. CF(1) is attached to CF(0) by a central stalk formed by the gamma and epsilon chains, while a peripheral stalk is formed by the delta and b chains.

The protein localises to the cell membrane. The enzyme catalyses ATP + H2O + 4 H(+)(in) = ADP + phosphate + 5 H(+)(out). In terms of biological role, produces ATP from ADP in the presence of a proton gradient across the membrane. The catalytic sites are hosted primarily by the beta subunits. The polypeptide is ATP synthase subunit beta (Desulforamulus reducens (strain ATCC BAA-1160 / DSM 100696 / MI-1) (Desulfotomaculum reducens)).